The chain runs to 288 residues: Ribosomal protein L11 methyltransferase (288 aa).

S-adenosyl-L-methionine contacts are provided by Thr-134, Gly-157, Asp-179, and Asn-224.

Belongs to the methyltransferase superfamily. PrmA family.

It is found in the cytoplasm. The enzyme catalyses L-lysyl-[protein] + 3 S-adenosyl-L-methionine = N(6),N(6),N(6)-trimethyl-L-lysyl-[protein] + 3 S-adenosyl-L-homocysteine + 3 H(+). Its function is as follows. Methylates ribosomal protein L11. This is Ribosomal protein L11 methyltransferase from Caulobacter sp. (strain K31).